The following is a 325-amino-acid chain: Siroheme decarboxylase NirDL subunit (325 aa).

The protein belongs to the Ahb/Nir family. In terms of assembly, forms a complex composed of NirDL, NirG and NirH. All proteins are required for the total conversion of siroheme to didecarboxysiroheme.

It carries out the reaction siroheme + 2 H(+) = 12,18-didecarboxysiroheme + 2 CO2. The protein operates within porphyrin-containing compound metabolism. Functionally, involved in heme d1 biosynthesis. Catalyzes the decarboxylation of siroheme into didecarboxysiroheme. The protein is Siroheme decarboxylase NirDL subunit of Paracoccus denitrificans (strain Pd 1222).